The sequence spans 286 residues: ATP synthase gamma chain (286 aa).

Belongs to the ATPase gamma chain family. F-type ATPases have 2 components, CF(1) - the catalytic core - and CF(0) - the membrane proton channel. CF(1) has five subunits: alpha(3), beta(3), gamma(1), delta(1), epsilon(1). CF(0) has three main subunits: a, b and c.

The protein localises to the cell inner membrane. Functionally, produces ATP from ADP in the presence of a proton gradient across the membrane. The gamma chain is believed to be important in regulating ATPase activity and the flow of protons through the CF(0) complex. The chain is ATP synthase gamma chain from Pseudomonas fluorescens (strain Pf0-1).